The following is a 62-amino-acid chain: Large ribosomal subunit protein bL28 (62 aa).

Belongs to the bacterial ribosomal protein bL28 family.

The chain is Large ribosomal subunit protein bL28 from Moorella thermoacetica (strain ATCC 39073 / JCM 9320).